A 425-amino-acid chain; its full sequence is bZIP transcription factor RISBZ2 (425 aa).

Disordered stretches follow at residues 1–50 (MERV…GGGG) and 169–257 (NSIG…AAHL). Residues 30 to 50 (QGGGGVASGGGGGVAGGGGGG) show a composition bias toward gly residues. Polar residues predominate over residues 171–182 (IGGNATPVQNML). Residues 213–222 (SDDDDMEGEA) are compositionally biased toward acidic residues. Over residues 231-247 (ADQRLQRRKQSNRESAR) the composition is skewed to basic and acidic residues. Positions 232–295 (DQRLQRRKQS…NDAAVDNRVL (64 aa)) constitute a bZIP domain. The segment at 234–253 (RLQRRKQSNRESARRSRSRK) is basic motif. The segment at 260–274 (LEAQVSQLRVENSSL) is leucine-zipper. Residues 334-354 (MPFNSSPSEATSDAAVPIQDD) are disordered.

Heterodimer with RISBZ1/BZIP58.

The protein resides in the nucleus. Functionally, transcriptional activator that binds to the DNA specific sequence 5'-GCCACGT[AC]AG-3' found in the alpha-globulin gene promoter. Does not bind to promoters of other major storage genes such as glutelin, prolamin and albumin. Binds to the DNA specific sequence 5'-TGAGTCA-3' found in seed storage protein gene promoters. The polypeptide is bZIP transcription factor RISBZ2 (Oryza sativa subsp. japonica (Rice)).